The sequence spans 145 residues: MYPAHLLVLLAVCVSLLGASAISNQPRNLVQFSELIQCVNKGKRATYHYMDYGCYCGKGGSGTPVDALDRCCKTHDDCYGQAEKKGCFPFLTLYNFGCFPGGPTCGKGNTCQRFVCDCDLKAALCFAKSPYNNNNYNIDTKKRCK.

An N-terminal signal peptide occupies residues 1–21 (MYPAHLLVLLAVCVSLLGASA). A propeptide spanning residues 22–27 (ISNQPR) is cleaved from the precursor. Intrachain disulfides connect Cys-38–Cys-98, Cys-54–Cys-144, Cys-56–Cys-72, Cys-71–Cys-125, Cys-78–Cys-118, Cys-87–Cys-111, and Cys-105–Cys-116. Residues Tyr-55, Gly-57, and Gly-59 each coordinate Ca(2+). His-75 is an active-site residue. Residue Asp-76 coordinates Ca(2+). Asp-119 is a catalytic residue.

Belongs to the phospholipase A2 family. Group I subfamily. D49 sub-subfamily. Requires Ca(2+) as cofactor. As to expression, expressed by the venom gland.

It is found in the secreted. It carries out the reaction a 1,2-diacyl-sn-glycero-3-phosphocholine + H2O = a 1-acyl-sn-glycero-3-phosphocholine + a fatty acid + H(+). Functionally, snake venom phospholipase A2 (PLA2) that inhibits neuromuscular transmission by blocking acetylcholine release from the nerve termini. PLA2 catalyzes the calcium-dependent hydrolysis of the 2-acyl groups in 3-sn-phosphoglycerides. The sequence is that of Basic phospholipase A2 PC17 from Laticauda colubrina (Yellow-lipped sea krait).